The chain runs to 419 residues: S-adenosylmethionine synthase (419 aa).

Histidine 15 provides a ligand contact to ATP. Position 17 (aspartate 17) interacts with Mg(2+). Glutamate 43 contributes to the K(+) binding site. The L-methionine site is built by glutamate 56 and glutamine 100. Residues 100–110 (QSPDIAQGVNE) form a flexible loop region. ATP-binding positions include 171–173 (DGK), 248–249 (KF), aspartate 257, 263–264 (RK), alanine 280, and lysine 284. Residue aspartate 257 coordinates L-methionine. An L-methionine-binding site is contributed by lysine 288.

The protein belongs to the AdoMet synthase family. In terms of assembly, homotetramer; dimer of dimers. Requires Mg(2+) as cofactor. It depends on K(+) as a cofactor.

It localises to the cytoplasm. The enzyme catalyses L-methionine + ATP + H2O = S-adenosyl-L-methionine + phosphate + diphosphate. It functions in the pathway amino-acid biosynthesis; S-adenosyl-L-methionine biosynthesis; S-adenosyl-L-methionine from L-methionine: step 1/1. Catalyzes the formation of S-adenosylmethionine (AdoMet) from methionine and ATP. The overall synthetic reaction is composed of two sequential steps, AdoMet formation and the subsequent tripolyphosphate hydrolysis which occurs prior to release of AdoMet from the enzyme. The polypeptide is S-adenosylmethionine synthase (Prochlorococcus marinus (strain MIT 9303)).